Reading from the N-terminus, the 375-residue chain is Chaperone protein DnaJ (375 aa).

The region spanning 5 to 69 (DYYEILGIDK…QKRAQYDQFG (65 aa)) is the J domain. The CR-type zinc finger occupies 131–213 (GKETDIEIPK…CGGSGTVQKN (83 aa)). Zn(2+)-binding residues include C144, C147, C161, C164, C187, C190, C201, and C204. CXXCXGXG motif repeat units lie at residues 144–151 (CDTCNGSG), 161–168 (CSHCHGSG), 187–194 (CNYCQGTG), and 201–208 (CNTCGGSG).

This sequence belongs to the DnaJ family. In terms of assembly, homodimer. Zn(2+) is required as a cofactor.

The protein resides in the cytoplasm. In terms of biological role, participates actively in the response to hyperosmotic and heat shock by preventing the aggregation of stress-denatured proteins and by disaggregating proteins, also in an autonomous, DnaK-independent fashion. Unfolded proteins bind initially to DnaJ; upon interaction with the DnaJ-bound protein, DnaK hydrolyzes its bound ATP, resulting in the formation of a stable complex. GrpE releases ADP from DnaK; ATP binding to DnaK triggers the release of the substrate protein, thus completing the reaction cycle. Several rounds of ATP-dependent interactions between DnaJ, DnaK and GrpE are required for fully efficient folding. Also involved, together with DnaK and GrpE, in the DNA replication of plasmids through activation of initiation proteins. This chain is Chaperone protein DnaJ, found in Oceanobacillus iheyensis (strain DSM 14371 / CIP 107618 / JCM 11309 / KCTC 3954 / HTE831).